The primary structure comprises 901 residues: Cyanophycin synthetase (901 aa).

Positions 224–478 (KRILAASGVP…VAGAVMDMLF (255 aa)) constitute an ATP-grasp domain. 493 to 499 (GTNGKTT) provides a ligand contact to ATP.

The protein in the C-terminal section; belongs to the MurCDEF family. Homodimer.

The enzyme catalyses [L-4-(L-arginin-2-N-yl)aspartate](n) + L-aspartate + ATP = [L-4-(L-arginin-2-N-yl)aspartate](n)-L-aspartate + ADP + phosphate + H(+). It carries out the reaction [L-4-(L-arginin-2-N-yl)aspartate](n)-L-aspartate + L-arginine + ATP = [L-4-(L-arginin-2-N-yl)aspartate](n+1) + ADP + phosphate + H(+). Its function is as follows. Catalyzes the ATP-dependent polymerization of arginine and aspartate to multi-L-arginyl-poly-L-aspartic acid (cyanophycin; a water-insoluble reserve polymer). This is Cyanophycin synthetase (cphA) from Nostoc sp. (strain PCC 7120 / SAG 25.82 / UTEX 2576).